Consider the following 226-residue polypeptide: uncharacterized protein (226 aa).

One can recognise an HTH cro/C1-type domain in the interval 168-226 (ISALRNKLGLTQTDLGKRINVDANVIRNIETGDLVAFNVQDPMVRSLAYALGIRTIKYQ). Residues 179–198 (QTDLGKRINVDANVIRNIET) constitute a DNA-binding region (H-T-H motif).

This is an uncharacterized protein from Acanthamoeba polyphaga mimivirus (APMV).